An 851-amino-acid chain; its full sequence is Envelope glycoprotein gp160 (851 aa).

Positions 1 to 24 (MEPGRNQLLVAILLTSACLIYCKQ) are cleaved as a signal peptide. At 25–669 (YVTVFYGIPA…LTSWIKYIQY (645 aa)) the chain is on the extracellular side. N-linked (GlcNAc...) asparagine; by host glycosylation occurs at Asn37. Cys44 and Cys57 are joined by a disulfide. Residues Asn70, Asn114, Asn127, Asn134, Asn142, Asn157, Asn184, Asn195, Asn227, Asn230, Asn261, Asn267, Asn278, Asn289, Asn299, Asn355, Asn361, Asn388, Asn398, Asn401, Asn438, Asn453, and Asn456 are each glycosylated (N-linked (GlcNAc...) asparagine; by host). 5 cysteine pairs are disulfide-bonded: Cys101/Cys203, Cys108/Cys194, Cys113/Cys154, Cys216/Cys246, and Cys226/Cys238. Positions 113 to 153 (CNITSGTTATPSPPNITIIDENSTCIGDNNCTGLGKEEVVE) are V1. The interval 154–194 (CEFNMTGLEQDKKRKYNDAWYSRDVVCDKTNGTGTCYMRHC) is V2. Positions 294 to 327 (CKRPGNKTVVPITLMSGRRFHSRPVYNKKPGQAW) are V3. An intrachain disulfide couples Cys294 to Cys328. Disulfide bonds link Cys380-Cys437 and Cys387-Cys410. Residues 387 to 410 (CNMTWFLNWVENKTNQTHGNYAPC) form a V4 region. The interval 453 to 459 (NQTNITF) is V5. The tract at residues 502 to 522 (GVFVLGFLGFLATAGSAMGGA) is fusion peptide. The immunosuppression stretch occupies residues 565 to 581 (LQARVTAIEKYLKDQAQ). Residues Asn601, Asn610, and Asn626 are each glycosylated (N-linked (GlcNAc...) asparagine; by host). An MPER; binding to GalCer region spans residues 647–668 (KLNSWDVFGNWFDLTSWIKYIQ). The chain crosses the membrane as a helical span at residues 670–690 (GVYIVVGIIGLRIAIYIVQLL). The Cytoplasmic segment spans residues 691-851 (SRLRKGYRPV…IRQGAEIALL (161 aa)). The short motif at 697–700 (YRPV) is the YXXV motif; contains endocytosis signal element. A lipid anchor (S-palmitoyl cysteine; by host) is attached at Cys763. The short motif at 850-851 (LL) is the Di-leucine internalization motif element.

The mature envelope protein (Env) consists of a homotrimer of non-covalently associated gp120-gp41 heterodimers. The resulting complex protrudes from the virus surface as a spike. There seems to be as few as 10 spikes on the average virion. Interacts with human CD4, CCR5 and CXCR4, to form a P4HB/PDI-CD4-CXCR4-gp120 complex. Gp120 also interacts with the C-type lectins CD209/DC-SIGN and CLEC4M/DC-SIGNR (collectively referred to as DC-SIGN(R)). Gp120 and gp41 interact with GalCer. In terms of assembly, the mature envelope protein (Env) consists of a homotrimer of non-covalently associated gp120-gp41 heterodimers. The resulting complex protrudes from the virus surface as a spike. There seems to be as few as 10 spikes on the average virion. Specific enzymatic cleavages in vivo yield mature proteins. Envelope glycoproteins are synthesized as an inactive precursor that is heavily N-glycosylated and processed likely by host cell furin in the Golgi to yield the mature SU and TM proteins. The cleavage site between SU and TM requires the minimal sequence [KR]-X-[KR]-R. Post-translationally, palmitoylation of the transmembrane protein and of Env polyprotein (prior to its proteolytic cleavage) is essential for their association with host cell membrane lipid rafts. Palmitoylation is therefore required for envelope trafficking to classical lipid rafts, but not for viral replication.

It localises to the virion membrane. The protein resides in the host cell membrane. It is found in the host endosome membrane. Functionally, the surface protein gp120 (SU) attaches the virus to the host lymphoid cell by binding to the primary receptor CD4. This interaction induces a structural rearrangement creating a high affinity binding site for a chemokine coreceptor like CXCR4 and/or CCR5. This peculiar 2 stage receptor-interaction strategy allows gp120 to maintain the highly conserved coreceptor-binding site in a cryptic conformation, protected from neutralizing antibodies. Since CD4 also displays a binding site for the disulfide-isomerase P4HB/PDI, a P4HB/PDI-CD4-CXCR4-gp120 complex may form. In that complex, P4HB/PDI could reach and reduce gp120 disulfide bonds, causing major conformational changes in gp120. TXN, another PDI family member could also be involved in disulfide rearrangements in Env during fusion. These changes are transmitted to the transmembrane protein gp41 and are thought to activate its fusogenic potential by unmasking its fusion peptide. Its function is as follows. The surface protein gp120 is a ligand for CD209/DC-SIGN and CLEC4M/DC-SIGNR, which are respectively found on dendritic cells (DCs), and on endothelial cells of liver sinusoids and lymph node sinuses. These interactions allow capture of viral particles at mucosal surfaces by these cells and subsequent transmission to permissive cells. DCs are professional antigen presenting cells, critical for host immunity by inducing specific immune responses against a broad variety of pathogens. They act as sentinels in various tissues where they take up antigen, process it, and present it to T-cells following migration to lymphoid organs. HIV subverts the migration properties of dendritic cells to gain access to CD4+ T-cells in lymph nodes. Virus transmission to permissive T-cells occurs either in trans (without DCs infection, through viral capture and transmission), or in cis (following DCs productive infection, through the usual CD4-gp120 interaction), thereby inducing a robust infection. In trans infection, bound virions remain infectious over days and it is proposed that they are not degraded, but protected in non-lysosomal acidic organelles within the DCs close to the cell membrane thus contributing to the viral infectious potential during DCs' migration from the periphery to the lymphoid tissues. On arrival at lymphoid tissues, intact virions recycle back to DCs' cell surface allowing virus transmission to CD4+ T-cells. Virion capture also seems to lead to MHC-II-restricted viral antigen presentation, and probably to the activation of HIV-specific CD4+ cells. The transmembrane protein gp41 (TM) acts as a class I viral fusion protein. Under the current model, the protein has at least 3 conformational states: pre-fusion native state, pre-hairpin intermediate state, and post-fusion hairpin state. During fusion of viral and target intracellular membranes, the coiled coil regions (heptad repeats) assume a trimer-of-hairpins structure, positioning the fusion peptide in close proximity to the C-terminal region of the ectodomain. The formation of this structure appears to drive apposition and subsequent fusion of viral and target cell membranes. Complete fusion occurs in host cell endosomes and is dynamin-dependent, however some lipid transfer might occur at the plasma membrane. The virus undergoes clathrin-dependent internalization long before endosomal fusion, thus minimizing the surface exposure of conserved viral epitopes during fusion and reducing the efficacy of inhibitors targeting these epitopes. Membranes fusion leads to delivery of the nucleocapsid into the cytoplasm. In terms of biological role, the envelope glycoprotein gp160 precursor down-modulates cell surface CD4 antigen by interacting with it in the endoplasmic reticulum and blocking its transport to the cell surface. Functionally, the gp120-gp41 heterodimer seems to contribute to T-cell depletion during HIV-1 infection. The envelope glycoproteins expressed on the surface of infected cells induce apoptosis through an interaction with uninfected cells expressing the receptor (CD4) and the coreceptors CXCR4 or CCR5. This type of bystander killing may be obtained by at least three distinct mechanisms. First, the interaction between the 2 cells can induce cellular fusion followed by nuclear fusion within the syncytium. Syncytia are condemned to die from apoptosis. Second, the 2 interacting cells may not fuse entirely and simply exchange plasma membrane lipids, after a sort of hemifusion process, followed by rapid death. Third, it is possible that virus-infected cells, on the point of undergoing apoptosis, fuse with CD4-expressing cells, in which case apoptosis is rapidly transmitted from one cell to the other and thus occurs in a sort of contagious fashion. Its function is as follows. The gp120-gp41 heterodimer allows rapid transcytosis of the virus through CD4 negative cells such as simple epithelial monolayers of the intestinal, rectal and endocervical epithelial barriers. Both gp120 and gp41 specifically recognize glycosphingolipids galactosyl-ceramide (GalCer) or 3' sulfo-galactosyl-ceramide (GalS) present in the lipid rafts structures of epithelial cells. Binding to these alternative receptors allows the rapid transcytosis of the virus through the epithelial cells. This transcytotic vesicle-mediated transport of virions from the apical side to the basolateral side of the epithelial cells does not involve infection of the cells themselves. In Human immunodeficiency virus type 2 subtype A (isolate D194) (HIV-2), this protein is Envelope glycoprotein gp160 (env).